The following is a 198-amino-acid chain: Nudix hydrolase 21, chloroplastic (198 aa).

A chloroplast-targeting transit peptide spans 1–37 (MISLFISNFSNLSNLSPTFDNMNMNIPSKKIVPVPTP). Residues 59 to 191 (GYRQVVGCVP…WMREALEAFI (133 aa)) form the Nudix hydrolase domain. The Nudix box signature appears at 98-119 (GGWEIDESIEEAALRETIEEAG). Positions 113 and 117 each coordinate Mg(2+).

It belongs to the Nudix hydrolase family. Requires Mg(2+) as cofactor. The cofactor is Mn(2+). In terms of tissue distribution, expressed in roots, leaves, stems and inflorescences.

It localises to the plastid. Its subcellular location is the chloroplast. Functionally, probably mediates the hydrolysis of some nucleoside diphosphate derivatives. This chain is Nudix hydrolase 21, chloroplastic (NUDT21), found in Arabidopsis thaliana (Mouse-ear cress).